Reading from the N-terminus, the 224-residue chain is Mammalian ependymin-related protein 1 (224 aa).

Residues 1–37 form the signal peptide; sequence MPGRAPLRTVPGALGAWLLGGLWAWTLCGLCSLGAVG. Cystine bridges form between cysteine 42-cysteine 172, cysteine 88-cysteine 222, and cysteine 113-cysteine 210. Residues asparagine 130 and asparagine 182 are each glycosylated (N-linked (GlcNAc...) asparagine).

This sequence belongs to the ependymin family. In terms of assembly, homodimer. N-glycosylated; the glycan contains mannose-6-phosphate moieties. As to expression, ubiquitous. Detected in brain, heart, skeletal muscle, kidney, testis, ovary and prostate.

Its subcellular location is the lysosome lumen. The protein resides in the secreted. Functionally, binds anionic lipids and gangliosides at acidic pH. In Homo sapiens (Human), this protein is Mammalian ependymin-related protein 1 (EPDR1).